A 661-amino-acid polypeptide reads, in one-letter code: Pentatricopeptide repeat-containing protein At5g66631 (661 aa).

9 PPR repeats span residues 139 to 173 (VHFS…GEEK), 176 to 210 (CTES…GGIP), 211 to 245 (NSRT…RITR), 246 to 280 (TLKH…GKFP), 410 to 444 (DAYT…GIKL), 445 to 475 (PFST…DRTL), 484 to 518 (LMLL…GVSP), 519 to 553 (DIQT…GLEP), and 554 to 588 (DPYM…NLMP).

The protein belongs to the PPR family. P subfamily.

The protein is Pentatricopeptide repeat-containing protein At5g66631 of Arabidopsis thaliana (Mouse-ear cress).